The sequence spans 398 residues: G2/mitotic-specific cyclin-B2 (398 aa).

The residue at position 8 (threonine 8) is a Phosphothreonine. Phosphoserine occurs at positions 11, 77, and 92. Residue threonine 94 is modified to Phosphothreonine. Serine 99, serine 392, and serine 398 each carry phosphoserine.

It belongs to the cyclin family. Cyclin AB subfamily. Interacts with the CDK1 protein kinase to form a serine/threonine kinase holoenzyme complex also known as maturation promoting factor (MPF). The cyclin subunit imparts substrate specificity to the complex.

In terms of biological role, essential for the control of the cell cycle at the G2/M (mitosis) transition. This chain is G2/mitotic-specific cyclin-B2 (CCNB2), found in Macaca fascicularis (Crab-eating macaque).